Consider the following 124-residue polypeptide: Fluoride-specific ion channel FluC (124 aa).

The next 3 helical transmembrane spans lie at 36-56 (VGTMIVNVVGSFLMGVLVVVL), 63-83 (YAPFLMTGMLGGFTTFSAFSL), and 99-119 (AYVGLSVGLSLAGLMAGMAAV). The Na(+) site is built by G73 and T76.

It belongs to the fluoride channel Fluc/FEX (TC 1.A.43) family.

The protein resides in the cell inner membrane. It catalyses the reaction fluoride(in) = fluoride(out). Its activity is regulated as follows. Na(+) is not transported, but it plays an essential structural role and its presence is essential for fluoride channel function. Fluoride-specific ion channel. Important for reducing fluoride concentration in the cell, thus reducing its toxicity. The protein is Fluoride-specific ion channel FluC of Cereibacter sphaeroides (strain ATCC 17029 / ATH 2.4.9) (Rhodobacter sphaeroides).